Consider the following 379-residue polypeptide: Cobalt-precorrin-5B C(1)-methyltransferase (379 aa).

This sequence belongs to the CbiD family.

It carries out the reaction Co-precorrin-5B + S-adenosyl-L-methionine = Co-precorrin-6A + S-adenosyl-L-homocysteine. It participates in cofactor biosynthesis; adenosylcobalamin biosynthesis; cob(II)yrinate a,c-diamide from sirohydrochlorin (anaerobic route): step 6/10. In terms of biological role, catalyzes the methylation of C-1 in cobalt-precorrin-5B to form cobalt-precorrin-6A. In Cyanothece sp. (strain PCC 7425 / ATCC 29141), this protein is Cobalt-precorrin-5B C(1)-methyltransferase.